Consider the following 1858-residue polypeptide: Inactive histone-lysine N-methyltransferase 2E (1858 aa).

The HCFC1-binding motif (HBM) signature appears at 63–66 (DHNY). The segment at 118–166 (VTRCICGFTHDDGYMICCDKCSVWQHIDCMGIDRQHIPDTYLCERCQPR) adopts a PHD-type zinc-finger fold. C121, C123, C135, C138, H143, C146, C160, and C163 together coordinate Zn(2+). Residues 217 to 269 (ASRVSKVNDKRRKKSGEKEQHISKCKKAFREGSRKSSRVKGSAPEIDPSSDGS) are disordered. The segment covering 232-250 (GEKEQHISKCKKAFREGSR) has biased composition (basic and acidic residues). The SET domain maps to 330–447 (PPVESHIQKN…KGTEITIAFD (118 aa)). O-linked (GlcNAc) serine glycosylation occurs at S435. Residue T440 is glycosylated (O-linked (GlcNAc) threonine). Residues 475–530 (SESMENINSGYETRRKKGKKDKDISKEKDTQNQNITLDCEGTTNKMKSPETKQRKL) are disordered. Residues 494-504 (KDKDISKEKDT) are compositionally biased toward basic and acidic residues. The segment covering 505-520 (QNQNITLDCEGTTNKM) has biased composition (polar residues). Residues 559 to 615 (VEMESEEQIAERKRKMTREERKMEAILQAFARLEKREKRREQALERISTAKTEVKTE) adopt a coiled-coil conformation. The residue at position 623 (S623) is a Phosphoserine. The segment at 630–687 (EQAKEENASKPTPAKVNRTKQRKSFSRSRTHIGQQRRRHRTVSMCSDIQPSSPDIEVT) is disordered. Residues 646–670 (NRTKQRKSFSRSRTHIGQQRRRHRT) are compositionally biased toward basic residues. Polar residues predominate over residues 672–687 (SMCSDIQPSSPDIEVT). A phosphoserine mark is found at S837 and S845. 2 stretches are compositionally biased toward low complexity: residues 887-901 (TSTPTPSPYATPTHT) and 933-957 (PVTPVTPGTPGNTMHFENISSPESS). 2 disordered regions span residues 887-960 (TSTP…SPEI) and 1039-1068 (LETPAHDRAEPNSQLDSTHSGRGTMYSSWV). The span at 1039-1048 (LETPAHDRAE) shows a compositional bias: basic and acidic residues. Positions 1049-1068 (PNSQLDSTHSGRGTMYSSWV) are enriched in polar residues. At S1070 the chain carries Phosphoserine. 2 disordered regions span residues 1164-1561 (KRQR…QNQQ) and 1581-1835 (VFTS…PVPG). Composition is skewed to polar residues over residues 1186–1206 (PHASGSLSNNGDGCASSNDNG) and 1222–1235 (TVYNATSEETSNNC). The residue at position 1273 (S1273) is a Phosphoserine. Over residues 1273–1282 (SDHRKDKDSG) the composition is skewed to basic and acidic residues. Composition is skewed to low complexity over residues 1285–1303 (SPCVSCSPSHVQSSPSSHS) and 1349–1362 (KSPPKMSKPGSPGS). S1359 carries the phosphoserine modification. Composition is skewed to polar residues over residues 1400-1432 (QQKQLSNNNQALSKNHPPQTHVRNSSEQLSQKL) and 1506-1542 (LPANTQQATSGTLFTQTPSGQSSATYSQFNQQSLNST). Residues 1543–1553 (APPPPPPPPPS) show a composition bias toward pro residues. Polar residues predominate over residues 1581–1599 (VFTSGPNQALPGTTSQQTV). The segment covering 1626–1637 (VPPPPPPPPAPG) has biased composition (pro residues). A compositionally biased stretch (polar residues) spans 1642–1651 (QQPNSHQQHS). Pro residues predominate over residues 1677-1687 (LPPPPPPPGPA). Over residues 1698 to 1711 (TGLQGLQAQHQHVV) the composition is skewed to polar residues. Over residues 1714 to 1724 (APPPPPPPPPS) the composition is skewed to pro residues. Residues 1798–1808 (QGPNSIPTPTA) show a composition bias toward polar residues.

The protein belongs to the class V-like SAM-binding methyltransferase superfamily. Histone-lysine methyltransferase family. TRX/MLL subfamily. Component of a complex composed of KMT2E (isoform 3), OGT and USP7; the complex stabilizes KMT2E, preventing KMT2E ubiquitination and proteasomal-mediated degradation. Isoform 3 interacts (via N-terminus) with OGT (via TRP repeats). Isoform 3 interacts with deubiquitinating enzyme USP7 (via MATH domain). Isoform 3 interacts (via HBM motif) with HCFC1 (via Kelch domain). Isoform 3 interacts with E2F1; the interaction is probably indirect and is mediated via HCFC1. Post-translationally, ubiquitinated. Deubiquitinated by USP7. In terms of processing, O-glycosylated at Ser-435 and Thr-440 in the SET domain by OGT which probably prevents KMT2E proteasomal-mediated degradation. In terms of tissue distribution, widely expressed in both adult and fetal tissues. Highest levels of expression observed in fetal thymus and kidney and in adult hematopoietic tissues, jejunum and cerebellum. Isoform NKp44L: Not detected on circulating cells from healthy individuals, but is expressed on a large panel of tumor and transformed cells.

The protein localises to the chromosome. It localises to the cytoplasm. Its subcellular location is the cytoskeleton. The protein resides in the microtubule organizing center. It is found in the centrosome. The protein localises to the nucleus speckle. It localises to the nucleus. Its subcellular location is the nucleoplasm. The protein resides in the cell membrane. Functionally, associates with chromatin regions downstream of transcriptional start sites of active genes and thus regulates gene transcription. Chromatin interaction is mediated via the binding to tri-methylated histone H3 at 'Lys-4' (H3K4me3). Key regulator of hematopoiesis involved in terminal myeloid differentiation and in the regulation of hematopoietic stem cell (HSCs) self-renewal by a mechanism that involves DNA methylation. Also acts as an important cell cycle regulator, participating in cell cycle regulatory network machinery at multiple cell cycle stages including G1/S transition, S phase progression and mitotic entry. Recruited to E2F1 responsive promoters by HCFC1 where it stimulates tri-methylation of histone H3 at 'Lys-4' and transcriptional activation and thereby facilitates G1 to S phase transition. During myoblast differentiation, required to suppress inappropriate expression of S-phase-promoting genes and maintain expression of determination genes in quiescent cells. In terms of biological role, cellular ligand for NCR2/NKp44, may play a role as a danger signal in cytotoxicity and NK-cell-mediated innate immunity. This Homo sapiens (Human) protein is Inactive histone-lysine N-methyltransferase 2E (KMT2E).